Here is a 372-residue protein sequence, read N- to C-terminus: Histidinol-phosphate aminotransferase (372 aa).

Lysine 229 bears the N6-(pyridoxal phosphate)lysine mark.

The protein belongs to the class-II pyridoxal-phosphate-dependent aminotransferase family. Histidinol-phosphate aminotransferase subfamily. Homodimer. The cofactor is pyridoxal 5'-phosphate.

The catalysed reaction is L-histidinol phosphate + 2-oxoglutarate = 3-(imidazol-4-yl)-2-oxopropyl phosphate + L-glutamate. Its pathway is amino-acid biosynthesis; L-histidine biosynthesis; L-histidine from 5-phospho-alpha-D-ribose 1-diphosphate: step 7/9. This is Histidinol-phosphate aminotransferase from Bdellovibrio bacteriovorus (strain ATCC 15356 / DSM 50701 / NCIMB 9529 / HD100).